Consider the following 468-residue polypeptide: Ribulose bisphosphate carboxylase large chain (468 aa).

Lys5 carries the N6,N6,N6-trimethyllysine modification. Residues Asn114 and Thr164 each contribute to the substrate site. Lys166 serves as the catalytic Proton acceptor. Lys168 lines the substrate pocket. Mg(2+) contacts are provided by Lys192, Asp194, and Glu195. An N6-carboxylysine modification is found at Lys192. His285 (proton acceptor) is an active-site residue. Residues Arg286, His318, and Ser370 each contribute to the substrate site.

Belongs to the RuBisCO large chain family. Type I subfamily. As to quaternary structure, heterohexadecamer of 8 large chains and 8 small chains; disulfide-linked. The disulfide link is formed within the large subunit homodimers. Mg(2+) serves as cofactor. In terms of processing, the disulfide bond which can form in the large chain dimeric partners within the hexadecamer appears to be associated with oxidative stress and protein turnover.

Its subcellular location is the plastid. The protein localises to the chloroplast. The catalysed reaction is 2 (2R)-3-phosphoglycerate + 2 H(+) = D-ribulose 1,5-bisphosphate + CO2 + H2O. It catalyses the reaction D-ribulose 1,5-bisphosphate + O2 = 2-phosphoglycolate + (2R)-3-phosphoglycerate + 2 H(+). In terms of biological role, ruBisCO catalyzes two reactions: the carboxylation of D-ribulose 1,5-bisphosphate, the primary event in carbon dioxide fixation, as well as the oxidative fragmentation of the pentose substrate in the photorespiration process. Both reactions occur simultaneously and in competition at the same active site. In Datura stramonium (Jimsonweed), this protein is Ribulose bisphosphate carboxylase large chain.